We begin with the raw amino-acid sequence, 373 residues long: Flagellar P-ring protein (373 aa).

An N-terminal signal peptide occupies residues 1 to 28; the sequence is MPRVSTHLVKLAAAALCALLLSAVAASA.

It belongs to the FlgI family. In terms of assembly, the basal body constitutes a major portion of the flagellar organelle and consists of four rings (L,P,S, and M) mounted on a central rod.

The protein resides in the periplasm. It is found in the bacterial flagellum basal body. Its function is as follows. Assembles around the rod to form the L-ring and probably protects the motor/basal body from shearing forces during rotation. The polypeptide is Flagellar P-ring protein (Rhodopseudomonas palustris (strain ATCC BAA-98 / CGA009)).